Consider the following 159-residue polypeptide: Phosphopantetheine adenylyltransferase (159 aa).

Residue T10 participates in substrate binding. ATP contacts are provided by residues 10–11 (TF) and H18. Residues K42, L73, and R87 each contribute to the substrate site. ATP contacts are provided by residues 88 to 90 (GLR), E98, and 123 to 129 (YSYVSGT).

Belongs to the bacterial CoaD family. As to quaternary structure, homohexamer. Requires Mg(2+) as cofactor.

It localises to the cytoplasm. The catalysed reaction is (R)-4'-phosphopantetheine + ATP + H(+) = 3'-dephospho-CoA + diphosphate. Its pathway is cofactor biosynthesis; coenzyme A biosynthesis; CoA from (R)-pantothenate: step 4/5. In terms of biological role, reversibly transfers an adenylyl group from ATP to 4'-phosphopantetheine, yielding dephospho-CoA (dPCoA) and pyrophosphate. This chain is Phosphopantetheine adenylyltransferase, found in Coxiella burnetii (strain CbuK_Q154) (Coxiella burnetii (strain Q154)).